We begin with the raw amino-acid sequence, 567 residues long: Urease subunit alpha (567 aa).

One can recognise a Urease domain in the interval 129 to 567; that stretch reads GGIDTHIHFI…LPMAQRYFLF (439 aa). The Ni(2+) site is built by His-134, His-136, and Lys-217. The residue at position 217 (Lys-217) is an N6-carboxylysine. A substrate-binding site is contributed by His-219. Residues His-246 and His-272 each coordinate Ni(2+). Catalysis depends on His-320, which acts as the Proton donor. Asp-360 contributes to the Ni(2+) binding site.

It belongs to the metallo-dependent hydrolases superfamily. Urease alpha subunit family. In terms of assembly, heterotrimer of UreA (gamma), UreB (beta) and UreC (alpha) subunits. Three heterotrimers associate to form the active enzyme. Requires Ni cation as cofactor. Post-translationally, carboxylation allows a single lysine to coordinate two nickel ions.

It is found in the cytoplasm. The enzyme catalyses urea + 2 H2O + H(+) = hydrogencarbonate + 2 NH4(+). The protein operates within nitrogen metabolism; urea degradation; CO(2) and NH(3) from urea (urease route): step 1/1. This is Urease subunit alpha from Delftia acidovorans (strain DSM 14801 / SPH-1).